The primary structure comprises 601 residues: Glutathione-regulated potassium-efflux system protein KefB (601 aa).

A run of 13 helical transmembrane segments spans residues 5–25 (DLLLAGILFLFAAVVAVPIAA), 29–49 (IGAVLGYLLAGIAIGPWGLGF), 55–75 (EILHFSELGVVFLMFLIGLEL), 87–107 (IFGIGAAQVLLSAVVLAGLLM), 115–135 (AAVVGGIGLAMSSTAMALQLM), 152–172 (VLLFQDLAVIPALAMVPLLAG), 181–201 (LKIGMKVLAFAVMLVGGRYLL), 207–227 (FIAGSGVREVFTAAALLLVLG), 230–250 (LFMDLLGLSMALGTFIAGILL), 268–288 (GLLLGLFFISVGMALNLGVLY), 291–311 (ILWVVMSVVVLVSVKMAVLYG), 324–344 (LPFAGVLSQGGEFAFVLFSSA), and 356–376 (ALLLVTVTLSMMTTPLVMKGI). The RCK N-terminal domain occupies 400–519 (KPQVIIVGFG…AGVKQFSRET (120 aa)).

This sequence belongs to the monovalent cation:proton antiporter 2 (CPA2) transporter (TC 2.A.37) family. KefB subfamily. As to quaternary structure, interacts with the regulatory subunit KefG.

It localises to the cell inner membrane. Pore-forming subunit of a potassium efflux system that confers protection against electrophiles. Catalyzes K(+)/H(+) antiport. This chain is Glutathione-regulated potassium-efflux system protein KefB, found in Cronobacter sakazakii (strain ATCC BAA-894) (Enterobacter sakazakii).